The primary structure comprises 313 residues: MSVNMKGRSLLTLLDFSSEEIRYLLDISKQVKMESRSRLRTERFKGMTLAMIFEKRSTRTRLAFETAFAEEGGHAIFLSPNDIHLGTKESLEDTARVLGRMVDAIMFRGYKQETVEKLAEYSGVPVYNGLTDDFHPTQALADLMTIEENFGRLKGVKVVFMGDTRNNVATSLMIACAKMGMNFVACGPEELKPRPDIFERCQEIARETSASVSFTSNLEEALAGADVVYTDVWASMGEEDKEKERISLLKPYQVNKRVMEMTGKPETIFMHCLPAVKGQEVTYEVIEGKQSRVWDEAENRKHTIKAVMIATLL.

Carbamoyl phosphate-binding positions include 57 to 60, arginine 108, and 135 to 138; these read STRT and HPTQ. Residues asparagine 167, aspartate 231, and 235–236 each bind L-ornithine; that span reads SM. Carbamoyl phosphate contacts are provided by residues 272 to 273 and arginine 300; that span reads CL.

This sequence belongs to the aspartate/ornithine carbamoyltransferase superfamily. OTCase family.

It is found in the cytoplasm. The enzyme catalyses carbamoyl phosphate + L-ornithine = L-citrulline + phosphate + H(+). It participates in amino-acid biosynthesis; L-arginine biosynthesis; L-arginine from L-ornithine and carbamoyl phosphate: step 1/3. In terms of biological role, reversibly catalyzes the transfer of the carbamoyl group from carbamoyl phosphate (CP) to the N(epsilon) atom of ornithine (ORN) to produce L-citrulline. The polypeptide is Ornithine carbamoyltransferase (Thermotoga petrophila (strain ATCC BAA-488 / DSM 13995 / JCM 10881 / RKU-1)).